Consider the following 202-residue polypeptide: Small ribosomal subunit protein uS4c (202 aa).

An S4 RNA-binding domain is found at 90-154 (MRLDNIIFRL…SQSIITKNLN (65 aa)).

The protein belongs to the universal ribosomal protein uS4 family. In terms of assembly, part of the 30S ribosomal subunit. Contacts protein S5. The interaction surface between S4 and S5 is involved in control of translational fidelity.

Its subcellular location is the plastid. The protein resides in the chloroplast. In terms of biological role, one of the primary rRNA binding proteins, it binds directly to 16S rRNA where it nucleates assembly of the body of the 30S subunit. Its function is as follows. With S5 and S12 plays an important role in translational accuracy. This chain is Small ribosomal subunit protein uS4c (rps4), found in Ricciocarpos natans (Liverwort).